We begin with the raw amino-acid sequence, 418 residues long: 1-deoxy-D-xylulose 5-phosphate reductoisomerase (418 aa).

Residues threonine 32, glycine 33, serine 34, isoleucine 35, and asparagine 150 each contribute to the NADPH site. Lysine 151 contacts 1-deoxy-D-xylulose 5-phosphate. Residue glutamate 152 participates in NADPH binding. A Mn(2+)-binding site is contributed by aspartate 174. Serine 175, glutamate 176, serine 200, and histidine 223 together coordinate 1-deoxy-D-xylulose 5-phosphate. Glutamate 176 lines the Mn(2+) pocket. Glycine 229 lines the NADPH pocket. The 1-deoxy-D-xylulose 5-phosphate site is built by serine 236, asparagine 241, lysine 242, and glutamate 245. Glutamate 245 is a Mn(2+) binding site.

Belongs to the DXR family. Mg(2+) serves as cofactor. It depends on Mn(2+) as a cofactor.

It carries out the reaction 2-C-methyl-D-erythritol 4-phosphate + NADP(+) = 1-deoxy-D-xylulose 5-phosphate + NADPH + H(+). Its pathway is isoprenoid biosynthesis; isopentenyl diphosphate biosynthesis via DXP pathway; isopentenyl diphosphate from 1-deoxy-D-xylulose 5-phosphate: step 1/6. Catalyzes the NADPH-dependent rearrangement and reduction of 1-deoxy-D-xylulose-5-phosphate (DXP) to 2-C-methyl-D-erythritol 4-phosphate (MEP). The chain is 1-deoxy-D-xylulose 5-phosphate reductoisomerase from Streptomyces coelicolor (strain ATCC BAA-471 / A3(2) / M145).